A 447-amino-acid polypeptide reads, in one-letter code: Argininosuccinate synthase (447 aa).

Residues 17-25 (AFSGGLDTS) and alanine 43 each bind ATP. Tyrosine 99 is a binding site for L-citrulline. ATP-binding residues include glycine 129 and threonine 131. Residues threonine 131, asparagine 135, and aspartate 136 each contribute to the L-aspartate site. Asparagine 135 provides a ligand contact to L-citrulline. Aspartate 136 serves as a coordination point for ATP. L-citrulline-binding residues include arginine 139 and serine 192. Aspartate 194 is an ATP binding site. Residues threonine 201, glutamate 203, and glutamate 280 each contribute to the L-citrulline site.

The protein belongs to the argininosuccinate synthase family. Type 2 subfamily. As to quaternary structure, homotetramer.

The protein localises to the cytoplasm. The enzyme catalyses L-citrulline + L-aspartate + ATP = 2-(N(omega)-L-arginino)succinate + AMP + diphosphate + H(+). The protein operates within amino-acid biosynthesis; L-arginine biosynthesis; L-arginine from L-ornithine and carbamoyl phosphate: step 2/3. The polypeptide is Argininosuccinate synthase (Salmonella dublin (strain CT_02021853)).